The primary structure comprises 472 residues: ATP-dependent rRNA helicase rrp3 (472 aa).

The tract at residues 1–51 is disordered; the sequence is MPDVKKRKIAHEAPEHGSDAESTSSHESVAQQDDTAETQDEAAATETRPAP. Positions 10 to 19 are enriched in basic and acidic residues; it reads AHEAPEHGSD. The segment covering 20 to 29 has biased composition (polar residues); the sequence is AESTSSHESV. Residues 52–80 carry the Q motif motif; that stretch reads KSFKDLGIIDQLCEACETMGYKAPTPIQA. Residues 83–254 form the Helicase ATP-binding domain; sequence IPLALQGRDL…RASLSNPLRV (172 aa). Residue 96–103 coordinates ATP; the sequence is AETGSGKT. The DEAD box motif lies at 202 to 205; the sequence is DEAD. Residues 282-426 form the Helicase C-terminal domain; the sequence is YLVYLLNEFV…EYELEKDEVM (145 aa). Positions 451–472 are disordered; the sequence is GTKAKKFGKGKRSRDEMDQEEG. The segment covering 452 to 462 has biased composition (basic residues); it reads TKAKKFGKGKR.

It belongs to the DEAD box helicase family. DDX47/RRP3 subfamily. In terms of assembly, interacts with the SSU processome.

It is found in the nucleus. It carries out the reaction ATP + H2O = ADP + phosphate + H(+). In terms of biological role, ATP-dependent rRNA helicase required for pre-ribosomal RNA processing. Involved in the maturation of the 35S-pre-rRNA and to its cleavage to mature 18S rRNA. In Neosartorya fischeri (strain ATCC 1020 / DSM 3700 / CBS 544.65 / FGSC A1164 / JCM 1740 / NRRL 181 / WB 181) (Aspergillus fischerianus), this protein is ATP-dependent rRNA helicase rrp3.